We begin with the raw amino-acid sequence, 194 residues long: Large ribosomal subunit protein bL9 (194 aa).

Residues 169 to 194 (DDINDNARPENFFDPNAEFDGGEDNA) form a disordered region.

Belongs to the bacterial ribosomal protein bL9 family.

Its function is as follows. Binds to the 23S rRNA. This is Large ribosomal subunit protein bL9 from Mesorhizobium japonicum (strain LMG 29417 / CECT 9101 / MAFF 303099) (Mesorhizobium loti (strain MAFF 303099)).